We begin with the raw amino-acid sequence, 432 residues long: N-acylneuraminate cytidylyltransferase (432 aa).

Residue Met1 is modified to N-acetylmethionine. A disordered region spans residues 1 to 38 (MDALEKGAATSGPAPRGRPSRGRPPKLQRSRGAGRGLE). The BC1 motif motif lies at 15–31 (PRGRPSRGRPPKLQRSR). Positions 18-29 (RPSRGRPPKLQR) are enriched in basic residues. Omega-N-methylarginine is present on residues Arg35 and Arg50. Substrate contacts are provided by Arg50, Asn60, Arg109, Ser118, Ser120, and Gln141. The short motif at 198–204 (KRPRRQD) is the BC2 motif element. Residue Arg199 is part of the active site. Positions 267–274 (KEKLKEIK) match the BC3 motif motif.

This sequence belongs to the CMP-NeuNAc synthase family. Homotetramer; the active enzyme is formed by a dimer of dimers. Liver.

It is found in the nucleus. The catalysed reaction is an N-acylneuraminate + CTP = a CMP-N-acyl-beta-neuraminate + diphosphate. The protein operates within amino-sugar metabolism; N-acetylneuraminate metabolism. Its function is as follows. Catalyzes the activation of N-acetylneuraminic acid (NeuNAc) to cytidine 5'-monophosphate N-acetylneuraminic acid (CMP-NeuNAc), a substrate required for the addition of sialic acid. Has some activity toward NeuNAc, N-glycolylneuraminic acid (Neu5Gc) or 2-keto-3-deoxy-D-glycero-D-galacto-nononic acid (KDN). In Rattus norvegicus (Rat), this protein is N-acylneuraminate cytidylyltransferase (Cmas).